The following is a 280-amino-acid chain: Phosphatidylglycerol--prolipoprotein diacylglyceryl transferase (280 aa).

4 helical membrane-spanning segments follow: residues 30-50 (WYGL…RRII), 71-91 (FLLW…ILFY), 106-126 (IWNG…AIII), and 132-152 (AIPL…GLFF). Residue Arg-154 participates in a 1,2-diacyl-sn-glycero-3-phospho-(1'-sn-glycerol) binding. 3 helical membrane-spanning segments follow: residues 188–208 (QLYE…WFVY), 217–237 (GLVT…VEFF), and 251–271 (WLTM…WAIA).

This sequence belongs to the Lgt family.

It is found in the cell inner membrane. The catalysed reaction is L-cysteinyl-[prolipoprotein] + a 1,2-diacyl-sn-glycero-3-phospho-(1'-sn-glycerol) = an S-1,2-diacyl-sn-glyceryl-L-cysteinyl-[prolipoprotein] + sn-glycerol 1-phosphate + H(+). The protein operates within protein modification; lipoprotein biosynthesis (diacylglyceryl transfer). Its function is as follows. Catalyzes the transfer of the diacylglyceryl group from phosphatidylglycerol to the sulfhydryl group of the N-terminal cysteine of a prolipoprotein, the first step in the formation of mature lipoproteins. This is Phosphatidylglycerol--prolipoprotein diacylglyceryl transferase from Rhizobium meliloti (strain 1021) (Ensifer meliloti).